A 429-amino-acid chain; its full sequence is MLVVKKTPKIKGILSAPPSKSYTHRAVICASLANGISNLKNPLNGADCLSSAHACEMFGAEIELSNETWVVRGSELKTPDNIVDIGNSGTTLRILTGISSQISNGYTVLTGDDSIRKRPMQPLLDALNQLGLTCFSTKNNGTAPIVVKSGKISNNVVEIRGDVSSQFITSIMMTLPFSENDSEIVLTTPLKSEPYLNITIDVLDKFGVKIEKNEEKNKSGYKIKGNQKYLPCDYTIEGDYSSASYLVAAGVLLNSDIVIKNVFKDSKQGDREIIEIVKKMGANVEINEDHVKITGPYKLKGIEIDVTDIPDLVPTIAVLGCFADGKTVVYNGEHVRLKECDRLAACTTELSKMGAEIEEKKDGLIITGVHKLNGAKLKTYHDHRLVMAFTIAGMLADGETIIEGEDSVKISFPDFVDNMKSIGSNIEVI.

Residues Lys-20, Ser-21, and Arg-25 each contribute to the 3-phosphoshikimate site. Lys-20 provides a ligand contact to phosphoenolpyruvate. Residues Gly-89 and Arg-118 each coordinate phosphoenolpyruvate. 3-phosphoshikimate-binding residues include Ser-164, Ser-165, Gln-166, Ser-192, Asp-311, and Lys-338. Gln-166 contributes to the phosphoenolpyruvate binding site. Residue Asp-311 is the Proton acceptor of the active site. Arg-342 and Arg-384 together coordinate phosphoenolpyruvate.

This sequence belongs to the EPSP synthase family. As to quaternary structure, monomer.

It localises to the cytoplasm. The enzyme catalyses 3-phosphoshikimate + phosphoenolpyruvate = 5-O-(1-carboxyvinyl)-3-phosphoshikimate + phosphate. Its pathway is metabolic intermediate biosynthesis; chorismate biosynthesis. Its function is as follows. Catalyzes the transfer of the enolpyruvyl moiety of phosphoenolpyruvate (PEP) to the 5-hydroxyl of shikimate-3-phosphate (S3P) to produce enolpyruvyl shikimate-3-phosphate and inorganic phosphate. This is 3-phosphoshikimate 1-carboxyvinyltransferase from Methanococcus maripaludis (strain C5 / ATCC BAA-1333).